The following is a 384-amino-acid chain: Beta-ureidopropionase (384 aa).

The 273-residue stretch at 72 to 344 (VHVGLVQNRI…DGLLVAKLDL (273 aa)) folds into the CN hydrolase domain. Glu119 serves as the catalytic Proton acceptor. Lys196 serves as the catalytic Proton donor. Cys233 (nucleophile) is an active-site residue. Ser378 is modified (phosphoserine).

This sequence belongs to the carbon-nitrogen hydrolase superfamily. BUP family. Homodimer, homotetramer, homooctamer; can also form higher homooligomers.

It localises to the cytoplasm. The enzyme catalyses 3-(carbamoylamino)propanoate + H2O + 2 H(+) = beta-alanine + NH4(+) + CO2. It carries out the reaction 3-(carbamoylamino)-2-methylpropanoate + H2O + 2 H(+) = (R)-3-amino-2-methylpropanoate + NH4(+) + CO2. The protein operates within amino-acid biosynthesis; beta-alanine biosynthesis. Functionally, catalyzes a late step in pyrimidine degradation. Converts N-carbamoyl-beta-alanine (3-ureidopropanoate) into beta-alanine, ammonia and carbon dioxide. Likewise, converts N-carbamoyl-beta-aminoisobutyrate (3-ureidoisobutyrate) into beta-aminoisobutyrate, ammonia and carbon dioxide. This is Beta-ureidopropionase (UPB1) from Pongo abelii (Sumatran orangutan).